Here is a 351-residue protein sequence, read N- to C-terminus: ADP-glucose phosphorylase (351 aa).

Positions 1-63 (MTSPSHASDR…QNPNPKPSSC (63 aa)) are disordered. Residue 41 to 44 (RAKR) coordinates ADP-alpha-D-glucose. The Zn(2+) site is built by C63 and C66. ADP-alpha-D-glucose-binding positions include 72 to 74 (ECA) and N94. A Zn(2+)-binding site is contributed by H133. ADP-alpha-D-glucose-binding positions include N173 and 179–182 (GASM). Zn(2+) is bound at residue H184. The Tele-AMP-histidine intermediate role is filled by H186. Residue Q188 participates in ADP-alpha-D-glucose binding. Zn(2+) is bound by residues C216, C219, H255, and H310. ADP-alpha-D-glucose is bound by residues G321 and 325 to 326 (FE).

Belongs to the galactose-1-phosphate uridylyltransferase type 1 family. In terms of assembly, homodimer. Zn(2+) serves as cofactor.

The enzyme catalyses alpha-D-glucose 1-phosphate + ADP + H(+) = ADP-alpha-D-glucose + phosphate. Catalyzes the conversion of ADP-glucose and inorganic phosphate (Pi) into glucose-1-phosphate and ADP. Does not possess galactose-1-phosphate uridylyltransferase activity. The protein is ADP-glucose phosphorylase of Arabidopsis thaliana (Mouse-ear cress).